The primary structure comprises 214 residues: MNLSSASSTEEKAVTTVLWGCELSQERRTWTFRPQLEGKQSCRLLLHTICLGEKAKEEMHRVEILPPANQEDKKMQPVTIASLQASVLPMVSMVGVQLSPPVTFQLRAGSGPVFLSGQERYEASDLTWEEEEEEEGEEEEEEEEDDEDEDADISLEEQSPVKQVKRLVPQKQASVAKKKKLEKEEEEIRASVRDKSPVKKAKATARAKKPGFKK.

The segment at 119–214 (ERYEASDLTW…ARAKKPGFKK (96 aa)) is disordered. Acidic residues predominate over residues 127-155 (TWEEEEEEEGEEEEEEEEDDEDEDADISL). The acidic tract A2 stretch occupies residues 129 to 152 (EEEEEEEGEEEEEEEEDDEDEDAD). The Bipartite nuclear localization signal motif lies at 165-180 (KRLVPQKQASVAKKKK). The span at 181–197 (LEKEEEEIRASVRDKSP) shows a compositional bias: basic and acidic residues. Positions 198–214 (VKKAKATARAKKPGFKK) are enriched in basic residues.

This sequence belongs to the nucleoplasmin family. In terms of assembly, homopentamer, when bound to H2A-H2B dimers only. Homodecamer of two stacked pentamers, when bound to H2A-H2B dimers and H3-H4 tetramers simultaneously.

The protein localises to the nucleus. Core histones chaperone involved in chromatin reprogramming, specially during fertilization and early embryonic development. Probably involved in sperm DNA decondensation during fertilization. The protein is Nucleoplasmin-2 (NPM2) of Homo sapiens (Human).